The primary structure comprises 448 residues: Endoglucanase (448 aa).

The first 34 residues, 1–34 (MFSKIKKINFFKKTFSFLIAVVMMLFTVLGTNTY), serve as a signal peptide directing secretion. Substrate-binding positions include His70, 74–75 (WY), Tyr101, and His137. Glu175 (proton donor) is an active-site residue. Tyr237 is a substrate binding site. Residue Glu263 is the Nucleophile of the active site. Substrate-binding positions include 269–270 (AS), Trp297, and 302–304 (KSE).

This sequence belongs to the glycosyl hydrolase 5 (cellulase A) family.

It carries out the reaction Endohydrolysis of (1-&gt;4)-beta-D-glucosidic linkages in cellulose, lichenin and cereal beta-D-glucans.. This Clostridium saccharobutylicum protein is Endoglucanase (eglA).